We begin with the raw amino-acid sequence, 328 residues long: Phosphate acyltransferase (328 aa).

The protein belongs to the PlsX family. As to quaternary structure, homodimer. Probably interacts with PlsY.

It is found in the cytoplasm. The catalysed reaction is a fatty acyl-[ACP] + phosphate = an acyl phosphate + holo-[ACP]. Its pathway is lipid metabolism; phospholipid metabolism. Functionally, catalyzes the reversible formation of acyl-phosphate (acyl-PO(4)) from acyl-[acyl-carrier-protein] (acyl-ACP). This enzyme utilizes acyl-ACP as fatty acyl donor, but not acyl-CoA. In Mycoplasmoides gallisepticum (strain R(low / passage 15 / clone 2)) (Mycoplasma gallisepticum), this protein is Phosphate acyltransferase.